The sequence spans 230 residues: Large ribosomal subunit protein uL1 (230 aa).

It belongs to the universal ribosomal protein uL1 family. Part of the 50S ribosomal subunit.

Binds directly to 23S rRNA. The L1 stalk is quite mobile in the ribosome, and is involved in E site tRNA release. Its function is as follows. Protein L1 is also a translational repressor protein, it controls the translation of the L11 operon by binding to its mRNA. This is Large ribosomal subunit protein uL1 from Leptospira biflexa serovar Patoc (strain Patoc 1 / Ames).